The primary structure comprises 790 residues: Endonuclease MutS2 (790 aa).

Position 334–341 (334–341) interacts with ATP; that stretch reads GPNTGGKT. Residues 715–790 form the Smr domain; sequence IDVRGQNLEE…GMGVTIVHLK (76 aa).

This sequence belongs to the DNA mismatch repair MutS family. MutS2 subfamily. As to quaternary structure, homodimer. Binds to stalled ribosomes, contacting rRNA.

Endonuclease that is involved in the suppression of homologous recombination and thus may have a key role in the control of bacterial genetic diversity. In terms of biological role, acts as a ribosome collision sensor, splitting the ribosome into its 2 subunits. Detects stalled/collided 70S ribosomes which it binds and splits by an ATP-hydrolysis driven conformational change. Acts upstream of the ribosome quality control system (RQC), a ribosome-associated complex that mediates the extraction of incompletely synthesized nascent chains from stalled ribosomes and their subsequent degradation. Probably generates substrates for RQC. The polypeptide is Endonuclease MutS2 (Alkaliphilus oremlandii (strain OhILAs) (Clostridium oremlandii (strain OhILAs))).